The sequence spans 216 residues: Pyrophosphatase PpaX (216 aa).

Residue aspartate 9 is the Nucleophile of the active site.

Belongs to the HAD-like hydrolase superfamily. PpaX family. Mg(2+) is required as a cofactor.

The enzyme catalyses diphosphate + H2O = 2 phosphate + H(+). Functionally, hydrolyzes pyrophosphate formed during P-Ser-HPr dephosphorylation by HPrK/P. Might play a role in controlling the intracellular pyrophosphate pool. This chain is Pyrophosphatase PpaX, found in Bacillus thuringiensis (strain Al Hakam).